Here is a 389-residue protein sequence, read N- to C-terminus: Chalcone synthase 4-1 (389 aa).

Residue Cys164 is part of the active site.

The protein belongs to the thiolase-like superfamily. Chalcone/stilbene synthases family.

The enzyme catalyses (E)-4-coumaroyl-CoA + 3 malonyl-CoA + 3 H(+) = 2',4,4',6'-tetrahydroxychalcone + 3 CO2 + 4 CoA. It functions in the pathway secondary metabolite biosynthesis; flavonoid biosynthesis. The primary product of this enzyme is 4,2',4',6'-tetrahydroxychalcone (also termed naringenin-chalcone or chalcone) which can under specific conditions spontaneously isomerize into naringenin. This is Chalcone synthase 4-1 (CHS4-1) from Medicago sativa (Alfalfa).